Reading from the N-terminus, the 164-residue chain is Crossover junction endodeoxyribonuclease RuvC (164 aa).

Catalysis depends on residues Asp7, Glu67, and Asp139. Positions 7, 67, and 139 each coordinate Mg(2+).

It belongs to the RuvC family. As to quaternary structure, homodimer which binds Holliday junction (HJ) DNA. The HJ becomes 2-fold symmetrical on binding to RuvC with unstacked arms; it has a different conformation from HJ DNA in complex with RuvA. In the full resolvosome a probable DNA-RuvA(4)-RuvB(12)-RuvC(2) complex forms which resolves the HJ. The cofactor is Mg(2+).

It is found in the cytoplasm. The catalysed reaction is Endonucleolytic cleavage at a junction such as a reciprocal single-stranded crossover between two homologous DNA duplexes (Holliday junction).. Functionally, the RuvA-RuvB-RuvC complex processes Holliday junction (HJ) DNA during genetic recombination and DNA repair. Endonuclease that resolves HJ intermediates. Cleaves cruciform DNA by making single-stranded nicks across the HJ at symmetrical positions within the homologous arms, yielding a 5'-phosphate and a 3'-hydroxyl group; requires a central core of homology in the junction. The consensus cleavage sequence is 5'-(A/T)TT(C/G)-3'. Cleavage occurs on the 3'-side of the TT dinucleotide at the point of strand exchange. HJ branch migration catalyzed by RuvA-RuvB allows RuvC to scan DNA until it finds its consensus sequence, where it cleaves and resolves the cruciform DNA. In Geobacter sulfurreducens (strain ATCC 51573 / DSM 12127 / PCA), this protein is Crossover junction endodeoxyribonuclease RuvC.